We begin with the raw amino-acid sequence, 122 residues long: Large ribosomal subunit protein bL19 (122 aa).

This sequence belongs to the bacterial ribosomal protein bL19 family.

Its function is as follows. This protein is located at the 30S-50S ribosomal subunit interface and may play a role in the structure and function of the aminoacyl-tRNA binding site. The chain is Large ribosomal subunit protein bL19 from Acinetobacter baumannii (strain AB307-0294).